We begin with the raw amino-acid sequence, 323 residues long: Penicillopepsin-1 (323 aa).

Ser3 carries an O-linked (Man...) serine glycan. O-linked (Man...) threonine glycosylation is present at Thr7. A Peptidase A1 domain is found at 17–320; it reads YITPVTIGGT…DSDGPQLGFA (304 aa). Residues Asp33 and Asp213 contribute to the active site. An intrachain disulfide couples Cys249 to Cys283.

It belongs to the peptidase A1 family. As to quaternary structure, monomer.

It is found in the secreted. It catalyses the reaction Hydrolysis of proteins with broad specificity similar to that of pepsin A, preferring hydrophobic residues at P1 and P1', but also cleaving 20-Gly-|-Glu-21 in the B chain of insulin. Clots milk, and activates trypsinogen.. Its function is as follows. Secreted aspartic endopeptidase that allows assimilation of proteinaceous substrates. The scissile peptide bond is attacked by a nucleophilic water molecule activated by two aspartic residues in the active site. Shows a broad primary substrate specificity. Favors hydrophobic residues at the P1 and P1' positions, but can also activate trypsinogen and hydrolyze the B chain of insulin between positions 'Gly-20' and 'Glu-21'. The chain is Penicillopepsin-1 from Penicillium janthinellum (Penicillium vitale).